We begin with the raw amino-acid sequence, 323 residues long: Peroxisome biogenesis protein 20 (323 aa).

Residue cysteine 8 forms a Glycyl cysteine thioester (Cys-Gly) (interchain with G-Cter in ubiquitin) linkage. A Glycyl lysine isopeptide (Lys-Gly) (interchain with G-Cter in ubiquitin) cross-link involves residue lysine 19. Short sequence motifs (wxxxF/Y motif) lie at residues 89–93, 102–105, and 141–145; these read WSSEF, WVED, and WTQEF.

Belongs to the peroxisomal targeting signal receptor family. As to quaternary structure, interacts (via WxxxF/Y and LVxEF motifs) with PEX14; promoting translocation through the PEX13-PEX14 docking complex. Interacts with PEX7. In terms of processing, monoubiquitinated at Cys-8 by PEX2 during PEX20 passage through the PEX2-PEX10-PEX12 retrotranslocation channel: monoubiquitination acts as a signal for PEX20 extraction and is required for proper export from peroxisomes and recycling. When PEX5 recycling is compromised, polyubiquitinated at Lys-19 by PEX10 during its passage through the retrotranslocation channel, leading to its degradation.

The protein resides in the cytoplasm. The protein localises to the cytosol. It localises to the peroxisome matrix. Coreceptor required for the peroxisomal import of proteins containing a C-terminal PTS2-type peroxisomal targeting signal, such as 3-oxoacyl-CoA thiolase. Acts via its interaction with PEX7, promoting association between PEX7 bound to cargo proteins and the PEX13-PEX14 docking complex. PEX20 along with PEX7 and PTS2-containing cargo proteins are tranlocated into peroxisomes by passing through the PEX13-PEX14 docking complex. PEX20 coreceptor is then retrotranslocated into the cytosol, leading to release of bound cargo in the peroxisome matrix, and reset for a subsequent peroxisome import cycle. Also mediates peroxisomal import of proteins that do not contain PTS1- or PTS2-type peroxisomal targeting signals, such as acyl-CoA oxidases (Aox) izozymes. Import of acyl-CoA oxidases (Aox) izozymes is independent of PEX7. Required for PEX7 ubiquitination. The protein is Peroxisome biogenesis protein 20 of Komagataella pastoris (Yeast).